Here is a 252-residue protein sequence, read N- to C-terminus: MLMIISPSKTQNFDPRPGIDYTVPAQAARTQRLVKQLRQYSPEDLGKLMKISPKLSDLNWQRYQDFQDSFTQNNAKQALLAFKGDVYNGIEVDTYTPEDFTFAQNHLRILSGLYGLLKPLDLIQPYRLEMGTKLQTDKGKTLYDFWGAQITDALNADLASDTTLVNLASGEYFKAVQPQQLNGKVLNIAFKENKNGTYKVIGIHAKRARGLMVNYAIQNRITAPKALQAFDEEGYGFEPSLSTETEWVFCRN.

Belongs to the UPF0246 family.

The polypeptide is UPF0246 protein AM1_4276 (Acaryochloris marina (strain MBIC 11017)).